The primary structure comprises 113 residues: MTISAQVIDTIVEWIDDNLHQPLRIEDIARHAGYSKWHLQRLFLQYKGESLGRYIRERKLLLAARDLRESDERVYEICLRYGFESQQTFTRIFTRTFHQPPGAYRKENHSRTH.

Residues 9–107 (DTIVEWIDDN…HQPPGAYRKE (99 aa)) enclose the HTH araC/xylS-type domain. 2 consecutive DNA-binding regions (H-T-H motif) follow at residues 26–47 (EDIA…LQYK) and 74–97 (VYEI…TRTF).

Its function is as follows. Probable transcriptional activator. The chain is Transcriptional activator RamA (ramA) from Enterobacter cloacae.